The primary structure comprises 447 residues: Tubulin beta-1 chain (447 aa).

Positions 11, 69, 138, 142, 143, 144, 204, and 226 each coordinate GTP. Glu69 provides a ligand contact to Mg(2+). The disordered stretch occupies residues 424–447 (QYQDATAEEEGEGDEEEAEGEAAA). Acidic residues predominate over residues 429–447 (TAEEEGEGDEEEAEGEAAA).

Belongs to the tubulin family. Dimer of alpha and beta chains. A typical microtubule is a hollow water-filled tube with an outer diameter of 25 nm and an inner diameter of 15 nM. Alpha-beta heterodimers associate head-to-tail to form protofilaments running lengthwise along the microtubule wall with the beta-tubulin subunit facing the microtubule plus end conferring a structural polarity. Microtubules usually have 13 protofilaments but different protofilament numbers can be found in some organisms and specialized cells. Mg(2+) is required as a cofactor.

Its subcellular location is the cytoplasm. It localises to the cytoskeleton. Tubulin is the major constituent of microtubules, a cylinder consisting of laterally associated linear protofilaments composed of alpha- and beta-tubulin heterodimers. Microtubules grow by the addition of GTP-tubulin dimers to the microtubule end, where a stabilizing cap forms. Below the cap, tubulin dimers are in GDP-bound state, owing to GTPase activity of alpha-tubulin. This is Tubulin beta-1 chain (TUBB1) from Cyanophora paradoxa.